The chain runs to 184 residues: Mediator of RNA polymerase II transcription subunit 30 (184 aa).

The stretch at 136–179 (SQLRFASEEKREILEVNKKLKQKNQQLKQIMDQLRNLIWDINSM) forms a coiled coil.

The protein belongs to the Mediator complex subunit 30 family. In terms of assembly, component of the Mediator complex.

The protein localises to the nucleus. In terms of biological role, component of the Mediator complex, a coactivator involved in the regulated transcription of nearly all RNA polymerase II-dependent genes. Mediator functions as a bridge to convey information from gene-specific regulatory proteins to the basal RNA polymerase II transcription machinery. Mediator is recruited to promoters by direct interactions with regulatory proteins and serves as a scaffold for the assembly of a functional preinitiation complex with RNA polymerase II and the general transcription factors. In Xenopus laevis (African clawed frog), this protein is Mediator of RNA polymerase II transcription subunit 30 (med30).